The following is a 328-amino-acid chain: D-cysteine desulfhydrase (328 aa).

Residue K51 is modified to N6-(pyridoxal phosphate)lysine.

The protein belongs to the ACC deaminase/D-cysteine desulfhydrase family. Homodimer. Requires pyridoxal 5'-phosphate as cofactor.

The catalysed reaction is D-cysteine + H2O = hydrogen sulfide + pyruvate + NH4(+) + H(+). Its function is as follows. Catalyzes the alpha,beta-elimination reaction of D-cysteine and of several D-cysteine derivatives. It could be a defense mechanism against D-cysteine. The protein is D-cysteine desulfhydrase of Escherichia coli O7:K1 (strain IAI39 / ExPEC).